Reading from the N-terminus, the 275-residue chain is Bis(5'-nucleosyl)-tetraphosphatase, symmetrical (275 aa).

The protein belongs to the Ap4A hydrolase family.

It catalyses the reaction P(1),P(4)-bis(5'-adenosyl) tetraphosphate + H2O = 2 ADP + 2 H(+). Functionally, hydrolyzes diadenosine 5',5'''-P1,P4-tetraphosphate to yield ADP. The protein is Bis(5'-nucleosyl)-tetraphosphatase, symmetrical of Actinobacillus succinogenes (strain ATCC 55618 / DSM 22257 / CCUG 43843 / 130Z).